Reading from the N-terminus, the 3960-residue chain is Replicase polyprotein 1ab (3960 aa).

The C4-type; atypical zinc-finger motif lies at 8-28; that stretch reads CTCTPNARVFMAEGQVYCTRC. Residues 69-180 enclose the Peptidase C31 domain; that stretch reads ECSPAGACWL…EDFCPFECAM (112 aa). The segment at 69-182 is PCP1-alpha; it reads ECSPAGACWL…FCPFECAMAT (114 aa). Residues cysteine 76 and histidine 146 each act as for Nsp1-alpha papain-like cysteine proteinase activity in the active site. Residues 199-200 are important for host EIF2AK2 inhibition; that stretch reads VS. The PCP1-beta stretch occupies residues 263–382; the sequence is DTVPEGNCWW…IFRFGSHKWY (120 aa). A Peptidase C32 domain is found at 263–383; sequence DTVPEGNCWW…FRFGSHKWYG (121 aa). Residues cysteine 270 and histidine 339 each act as for Nsp1-beta papain-like cysteine proteinase activity in the active site. The segment at 426-513 is OTU-like; sequence LKHYSPPAEG…GEHWTVTVTP (88 aa). Residues 428 to 535 enclose the Peptidase C33 domain; the sequence is HYSPPAEGNC…QGCCGHKGGL (108 aa). Active-site for Nsp2 cysteine proteinase activity residues include cysteine 437 and histidine 506. Disordered regions lie at residues 809-882, 899-979, and 1156-1213; these read RWTP…ATPS, TPLS…GVLG, and PLAF…GGGP. Pro residues predominate over residues 810–819; sequence WTPPPPPPKV. Helical transmembrane passes span 1266 to 1286, 1296 to 1316, 1345 to 1365, 1368 to 1388, 1583 to 1603, 1650 to 1670, 1685 to 1705, and 1719 to 1739; these read LCLF…LGVF, GVFG…SDPV, SLVV…LGGA, IWHF…GAYV, LMAA…GIYV, ALVA…FVSI, CVLL…LCVF, and ILWL…LAMV. The interval 1266-1388 is HD1; it reads LCLFLCYSYP…ADCILAGAYV (123 aa). Residues 1583-1745 are HD2; that stretch reads LMAALHVACS…LAMVLLVSLW (163 aa). Residues 1810–2013 form the Peptidase S32 domain; the sequence is GAFRTRKPSL…ALLAAKPELE (204 aa). Active-site charge relay system; for 3C-like serine proteinase activity residues include histidine 1848, aspartate 1873, and serine 1927. The next 5 helical transmembrane spans lie at 2012-2032, 2060-2080, 2092-2112, 2137-2157, and 2164-2184; these read LEGG…WRMM, FSFG…VLMI, WSLA…LAAT, SPVP…LYLF, and HILV…FAEG. Positions 2036–2157 are HD3; that stretch reads WTPLVAVSFF…HLLAIILYLF (122 aa). Positions 2329–2358 are disordered; that stretch reads PTPTPPPAPVPIPLPPKVLENGPNAWGDED. The segment covering 2330-2344 has biased composition (pro residues); that stretch reads TPTPPPAPVPIPLPP. A NiRAN domain is found at 2488 to 2650; sequence IIDKLQGLTK…LPYKLYPVRG (163 aa). One can recognise a RdRp catalytic domain in the interval 2889–3023; sequence GRCLEADLAS…YAESPTMPNY (135 aa). The 64-residue stretch at 3144–3207 folds into the AV ZBD domain; the sequence is GKKSRVCGYC…SPVGKGTSPL (64 aa). Residues cysteine 3150, cysteine 3153, cysteine 3163, cysteine 3168, histidine 3171, histidine 3173, histidine 3175, histidine 3177, cysteine 3184, histidine 3186, cysteine 3193, and cysteine 3196 each coordinate Zn(2+). A (+)RNA virus helicase ATP-binding domain is found at 3264 to 3416; it reads ASTALLPTCK…VFDIMPQTQL (153 aa). 3292-3299 is a binding site for ATP; that stretch reads GPPGAGKT. A (+)RNA virus helicase C-terminal domain is found at 3417–3545; sequence KTIWRFGQNI…AVHCDGQLIV (129 aa). The AV-Nsp11N/CoV-Nsp15M domain maps to 3584–3680; sequence EGSSSPLPKV…LTKFVKGGAQ (97 aa). The 123-residue stretch at 3682 to 3804 folds into the NendoU domain; sequence LPETVFSTGR…MVWKDKTAYF (123 aa). Residues histidine 3713, histidine 3728, and lysine 3757 contribute to the active site.

The protein belongs to the arteriviridae polyprotein family. In terms of assembly, nsp1-alpha papain-like: Interacts with host RNF31. As to quaternary structure, interacts with host EIF2AK2; this interaction occurs in host stress granules and leads to EIF2AK2 inhibition. Interacts with host G3BP1; this interaction probably plays a role in Nsp1-beta-mediated inhibition of host EIF2AK2. Interacts with host DDX18; this interaction redistributes host DDX18 to the cytoplasm. In terms of assembly, interacts with host IFITM1. As to quaternary structure, interacts with host DDX5. Interacts with host OTULIN. In terms of assembly, interacts with host LGALS3. In terms of processing, specific enzymatic cleavages in vivo by its own proteases yield mature proteins. Nsp1 is autocleaved into two subunits, Nsp1-alpha and Nsp1-beta. There are two alternative pathways for processing. Either nsp4-5 is cleaved, which represents the major pathway or the nsp5-6 and nsp6-7 are processed, which represents the minor pathway. The major pathway occurs when nsp2 acts as a cofactor for nsp4.

The protein resides in the host nucleus. The protein localises to the host cytoplasm. It is found in the host membrane. It localises to the host endoplasmic reticulum. Its subcellular location is the host perinuclear region. The enzyme catalyses RNA(n) + a ribonucleoside 5'-triphosphate = RNA(n+1) + diphosphate. It carries out the reaction ATP + H2O = ADP + phosphate + H(+). The catalysed reaction is Thiol-dependent hydrolysis of ester, thioester, amide, peptide and isopeptide bonds formed by the C-terminal Gly of ubiquitin (a 76-residue protein attached to proteins as an intracellular targeting signal).. It catalyses the reaction uridylyl-uridylyl-ribonucleotide-RNA = a 3'-end uridylyl-2',3'-cyclophospho-uridine-RNA + a 5'-end dephospho-ribonucleoside-RNA. Functionally, contains the activities necessary for the transcription of negative stranded RNA, leader RNA, subgenomic mRNAs and progeny virion RNA as well as proteinases responsible for the cleavage of the polyprotein into functional products. In terms of biological role, inhibits host IFN-beta production. Plays a role in the degradation of the host transcriptional activator CREBBP protein. The degradation of host CREBBP which is a key component of the IFN enhanceosome is likely responsible for the inhibition of interferon mediated by Nsp1-alpha. Also participates in the inhibition of host NF-kappa-B activation by counteracting LUBAC-dependent induction of NF-kappa-B. Reduces host NEMO ubiquitination by blocking the interaction between the two LUBAC complex components RNF31 and SHARPIN. Plays a role in blocking host mRNA nuclear export to the cytoplasm and subversion of host protein synthesis. Additionally, inhibits the interferon-activated JAK/STAT signal transduction by mediating the ubiquitination and subsequent proteasomal degradation of host KPNA1. Repurposes the host antiviral stress granules into a proviral platform to counteract the EIF2AK2/PKR restriction, thereby regulating the host inflammatory response. Its function is as follows. Multifunctional protein that acts as a viral protease and as a viral antagonist of host immune response. Cleaves the nsp2/nsp3 site in the viral polyprotein. Displays deubiquitinating activity that cleaves both ubiquitinated and ISGylated products and therefore inhibits ubiquitin and ISG15-dependent host innate immunity. Also deubiquinates host NFKBIA, thereby interfering with NFKBIA degradation and impairing subsequent NF-kappa-B activation. Functionally, plays a role in the inhibition of the immune response by interacting with host IFITM1. This interaction leads to the proteasomal degradation of the IFN-induced antiviral protein IFITM1. In terms of biological role, cleaves the majority of cleavage sites present in the C-terminus of the polyprotein. Triggers host apoptosis through caspase-3, -8, and -9 activations. Subverts host innate immune responses through its protease activity. Targets the NF-kappa-B essential modulator NEMO and mediates its cleavage. Blocks host interferon beta induction and downstream signaling by cleaving mitochondrial MAVS, dislodging it from the mitochondria. Impairs host defense by cleaving host mRNA-decapping enzyme DCP1A to attenuate its antiviral activity. Plays a role in the initial induction of autophagosomes from host endoplasmic reticulum. Its function is as follows. Plays a role in the inhibition of host STAT3 signaling pathway by inducing the degradation of STAT3. Functionally, responsible for replication and transcription of the viral RNA genome. In terms of biological role, displays RNA and DNA duplex-unwinding activities with 5' to 3' polarity. Plays a role in viral transcription/replication and prevents the simultaneous activation of host cell dsRNA sensors, such as MDA5/IFIH1, OAS, PKR and NLRP3 inflammasome. Acts by degrading the 5'-polyuridines generated during replication of the poly(A) region of viral genomic and subgenomic RNAs. Catalyzes a two-step reaction in which a 2'3'-cyclic phosphate (2'3'-cP) is first generated by 2'-O transesterification, which is then hydrolyzed to a 3'-phosphate (3'-P). If not degraded, poly(U) RNA would hybridize with poly(A) RNA tails and activate host dsRNA sensors. Also plays a role in the inhibition of host type I interferon production by recruiting host OTULIN to promote removal of linear ubiquitination targeting host NEMO. This chain is Replicase polyprotein 1ab (rep), found in Porcine reproductive and respiratory syndrome virus (strain VR-2332) (PRRSV).